Consider the following 90-residue polypeptide: Albumin-1 (90 aa).

Residue A1 is a signal peptide. Disulfide bonds link C4-C21, C8-C23, and C16-C34. Positions 40-47 (LSSVAKMI) are excised as a propeptide.

Post-translationally, the C-terminal glycine may be removed from A1b.

Its function is as follows. A1b binds to basic 7S globulin (BG) and stimulates its phosphorylation activity. The polypeptide is Albumin-1 (LEG) (Phaseolus angularis (Azuki bean)).